Consider the following 123-residue polypeptide: Protein HesB, heterocyst (123 aa).

It belongs to the HesB/IscA family.

Its function is as follows. May be required for efficient nitrogen fixation. This is Protein HesB, heterocyst (hesB1) from Trichormus variabilis (strain ATCC 29413 / PCC 7937) (Anabaena variabilis).